The chain runs to 128 residues: Probable 4-amino-4-deoxy-L-arabinose-phosphoundecaprenol flippase subunit ArnF (128 aa).

The Cytoplasmic segment spans residues 1-5 (MKGYG). Residues 6–26 (WGIGSVVLVTVAQLILKWGMM) traverse the membrane as a helical segment. The Periplasmic segment spans residues 27–47 (NTPLMSLADINGQFVFNHLPQ). The chain crosses the membrane as a helical span at residues 48-68 (FIAVICGLAGYALSMLCWFFA). The Cytoplasmic segment spans residues 69–77 (LRYLPLNRA). The helical transmembrane segment at 78-98 (YPLLSLSYALVYLGAVSLPWF) threads the bilayer. Topologically, residues 99-101 (SES) are periplasmic. The chain crosses the membrane as a helical span at residues 102-122 (ATLLKTLGAGFILLGIWLINT). At 123–128 (KPIAKD) the chain is on the cytoplasmic side.

Belongs to the ArnF family. Heterodimer of ArnE and ArnF.

It is found in the cell inner membrane. It participates in bacterial outer membrane biogenesis; lipopolysaccharide biosynthesis. Translocates 4-amino-4-deoxy-L-arabinose-phosphoundecaprenol (alpha-L-Ara4N-phosphoundecaprenol) from the cytoplasmic to the periplasmic side of the inner membrane. This is Probable 4-amino-4-deoxy-L-arabinose-phosphoundecaprenol flippase subunit ArnF from Yersinia enterocolitica serotype O:8 / biotype 1B (strain NCTC 13174 / 8081).